The sequence spans 32 residues: Kappa-theraphotoxin-Gr2b (32 aa).

3 cysteine pairs are disulfide-bonded: Cys2–Cys16, Cys9–Cys21, and Cys15–Cys25.

The protein belongs to the neurotoxin 30 (phrixotoxin) family. In terms of tissue distribution, expressed by the venom gland.

It localises to the secreted. In terms of biological role, binds the voltage-sensor domain of the potassium channel KvAP (from the archaeon Aeropyrum pernix) and affects channel gating. The polypeptide is Kappa-theraphotoxin-Gr2b (Grammostola rosea (Chilean rose tarantula)).